Here is a 1360-residue protein sequence, read N- to C-terminus: S-layer protein A (1360 aa).

Residues 1–24 form the signal peptide; it reads MNKSAIRYLSLLLVFLMGGSFLAG.

The protein belongs to the Sulfolobales SlaA family. In terms of assembly, the mushroom-shaped unit cells of the Sulfolobales' S-layers may consist of three SlaB subunits and six SlaA subunits.

The protein localises to the secreted. It is found in the cell wall. The protein resides in the S-layer. S-layer large protein. May form the highly ordered outer sheath. This Metallosphaera sedula (strain ATCC 51363 / DSM 5348 / JCM 9185 / NBRC 15509 / TH2) protein is S-layer protein A.